We begin with the raw amino-acid sequence, 267 residues long: MSRAVRPYLVLATQRSGSTLLVESLRATGCAGEPQEFFQYLPSTGMAPQPREWFAGVDDDTILQLLDPLDPGTPDTATPVAWREHVRTSGRTPNGVWGGKLMWNQTALLQQRAAQLPDRSGDGLRAAIRDVIGNEPVFVHVHRPDVVSQAVSFWRAVQTQVWRGHPDPKRDSQAVYHAGAIAHIIRNLRDQENGWRAWFAEEGIDPIDIAYPVLWRNLTAIVASVLDAIGQDPKLAPAPMLERQANQRSDEWVDRYRAEAPRLGLPT.

Residues glutamine 14, 33-39 (EPQEFFQ), proline 48, and tryptophan 53 contribute to the alpha,alpha-trehalose site. Glutamate 36 acts as the Proton acceptor in catalysis.

Belongs to the Stf0 sulfotransferase family. Homodimer.

The enzyme catalyses alpha,alpha-trehalose + 3'-phosphoadenylyl sulfate = 2-O-sulfo-alpha,alpha-trehalose + adenosine 3',5'-bisphosphate + H(+). It participates in glycolipid metabolism. Its function is as follows. Catalyzes the sulfuryl group transfer from 3'-phosphoadenosine-5'-phosphosulfate (PAPS) to trehalose, leading to trehalose-2-sulfate (T2S). The sulfation of trehalose is the first step in the biosynthesis of sulfolipid-1 (SL-1), a major cell wall glycolipid and the most abundant sulfated metabolite found in Mycobacterium tuberculosis, that is a potential virulence factor thought to mediate host-pathogen interactions. The sequence is that of Trehalose 2-sulfotransferase from Mycobacterium tuberculosis (strain ATCC 35801 / TMC 107 / Erdman).